An 84-amino-acid chain; its full sequence is Small ribosomal subunit protein bS20 (84 aa).

The disordered stretch occupies residues 1–32 (MPRHESAKKRMRQNEKRQKRNKSQKSRVRTKI).

It belongs to the bacterial ribosomal protein bS20 family.

In terms of biological role, binds directly to 16S ribosomal RNA. This chain is Small ribosomal subunit protein bS20, found in Salinibacter ruber (strain DSM 13855 / M31).